The primary structure comprises 877 residues: Clumping factor B (877 aa).

The signal sequence occupies residues 1–44; sequence MKKRIDYLSNKQNKYSIRRFTVGTTSVIVGATILFGIGNHQAQA. Positions 15-26 match the YSIRK-G/S signaling motif motif; the sequence is YSIRRFTVGTTS. Composition is skewed to polar residues over residues 44-61 and 68-95; these read ASEQ…NASA and MIET…NVDS. The interval 44–192 is disordered; it reads ASEQSNDTTQ…QGTSKPSVRT (149 aa). The segment at 45-542 is ligand binding A region; it reads SEQSNDTTQS…GSADGDSAVN (498 aa). Over residues 96–119 the composition is skewed to low complexity; sequence TTKPMSTQTSNTTTTEPASTNETP. Residues 120 to 189 are compositionally biased toward polar residues; it reads QPTAIKNQAT…SNAQGTSKPS (70 aa). The MIDAS-like motif motif lies at 272-276; the sequence is DYSNS. Residues 530–849 are disordered; the sequence is YGGGSADGDS…ETGDKSENTN (320 aa). Positions 545–555 are enriched in pro residues; the sequence is DPTPGPPVDPE. The segment covering 556–801 has biased composition (acidic residues); sequence PSPDPEPEPT…SDSDSDSDSD (246 aa). The span at 805 to 816 shows a compositional bias: polar residues; it reads RVTPPNNEQKAP. Residues 833 to 846 show a composition bias toward basic and acidic residues; sequence HKTDALPETGDKSE. The short motif at 838–842 is the LPXTG sorting signal element; that stretch reads LPETG. Thr-841 is modified (pentaglycyl murein peptidoglycan amidated threonine). A propeptide spans 842-877 (removed by sortase); sequence GDKSENTNATLFGAMMALLGSLLLFRKRKQDHKEKA.

Belongs to the serine-aspartate repeat-containing protein (SDr) family. Proteolytically cleaved by aureolysin (aur). This cleavage leads to the inactivation of ClfB.

The protein localises to the secreted. It localises to the cell wall. Functionally, cell surface-associated protein implicated in virulence by promoting bacterial attachment to both alpha- and beta-chains of human fibrinogen and inducing the formation of bacterial clumps. Partly responsible for mediating bacterial attachment to the highly keratinized squamous epithelial cells from the nasal cavity via an interaction with cytokeratin K10 (K10). Also promotes bacterial attachment to cultured keratinocytes, possibly through an interaction with cytokeratin K10. Binds mouse cytokeratin K10. Activates human platelet aggregation. The sequence is that of Clumping factor B (clfB) from Staphylococcus aureus (strain NCTC 8325 / PS 47).